The following is a 384-amino-acid chain: tRNA-specific 2-thiouridylase MnmA (384 aa).

ATP is bound by residues 9–16 (GMSGGVDS) and Met-35. The interval 95 to 97 (NPD) is interaction with target base in tRNA. Cys-100 serves as the catalytic Nucleophile. An intrachain disulfide couples Cys-100 to Cys-196. Residue Gly-124 coordinates ATP. An interaction with tRNA region spans residues 146–148 (KDQ). Catalysis depends on Cys-196, which acts as the Cysteine persulfide intermediate. Positions 308 to 309 (RY) are interaction with tRNA.

The protein belongs to the MnmA/TRMU family.

Its subcellular location is the cytoplasm. It catalyses the reaction S-sulfanyl-L-cysteinyl-[protein] + uridine(34) in tRNA + AH2 + ATP = 2-thiouridine(34) in tRNA + L-cysteinyl-[protein] + A + AMP + diphosphate + H(+). Functionally, catalyzes the 2-thiolation of uridine at the wobble position (U34) of tRNA, leading to the formation of s(2)U34. This chain is tRNA-specific 2-thiouridylase MnmA, found in Burkholderia ambifaria (strain ATCC BAA-244 / DSM 16087 / CCUG 44356 / LMG 19182 / AMMD) (Burkholderia cepacia (strain AMMD)).